Consider the following 555-residue polypeptide: Transcription factor kojR (555 aa).

The zn(2)-C6 fungal-type DNA-binding region spans 21–47 (CETCKLRKRKCDGHEPCTYCLRYEYQC). Positions 51–73 (PHPRRKPAASKSSARPSEEEDSP) are disordered.

The protein localises to the nucleus. In terms of biological role, transcription factor that regulates the gene cluster that mediates the biosynthesis of 5-hydroxy-2-hydroxymethyl-1,4-pyrone, also know as kojic acid, a by-product in the fermentation process of malting rice that acts as a chelation agent. Mediates the expression of kojA and kojT via binding of an 11-nucleotide palindromic sequence, 5'-CGRCTWAGYCG-3' (R=A/G, W=A/T, Y=C/T) within the target gene promoters. In Aspergillus flavus (strain ATCC 200026 / FGSC A1120 / IAM 13836 / NRRL 3357 / JCM 12722 / SRRC 167), this protein is Transcription factor kojR.